A 617-amino-acid polypeptide reads, in one-letter code: V-type proton ATPase catalytic subunit A (617 aa).

Threonine 136 bears the Phosphothreonine mark. Glycine 250–threonine 257 lines the ATP pocket. Serine 384 carries the post-translational modification Phosphoserine; by AMPK.

This sequence belongs to the ATPase alpha/beta chains family. V-ATPase is a heteromultimeric enzyme made up of two complexes: the ATP-hydrolytic V1 complex and the proton translocation V0 complex. The V1 complex consists of three catalytic AB heterodimers that form a heterohexamer, three peripheral stalks each consisting of EG heterodimers, one central rotor including subunits D and F, and the regulatory subunits C and H. The proton translocation complex V0 consists of the proton transport subunit a, a ring of proteolipid subunits c9c'', rotary subunit d, subunits e and f, and the accessory subunits ATP6AP1/Ac45 and ATP6AP2/PRR. Interacts with the V0 complex V-ATPase subunit a4 ATP6V0A4. Interacts with WFS1. Interacts with alpha-crystallin B chain/CRYAB and with MTOR, forming a ternary complex. Phosphorylation at Ser-384 by AMPK down-regulates its enzyme activity. Expressed in brain (at protein level).

It localises to the cytoplasm. The protein resides in the cytosol. The protein localises to the cytoplasmic vesicle. Its subcellular location is the secretory vesicle. It is found in the clathrin-coated vesicle membrane. It localises to the lysosome. It catalyses the reaction ATP + H2O + 4 H(+)(in) = ADP + phosphate + 5 H(+)(out). Its activity is regulated as follows. ATP hydrolysis occurs at the interface between the nucleotide-binding domains of subunits A and B. ATP hydrolysis triggers a conformational change in the subunits D and F, which induces a shift of subunit d. The c-ring is subsequently rotated and results in a continuous proton translocation across the membrane. The V-ATPase is inhibited by bafilomycin A. In terms of biological role, catalytic subunit of the V1 complex of vacuolar(H+)-ATPase (V-ATPase), a multisubunit enzyme composed of a peripheral complex (V1) that hydrolyzes ATP and a membrane integral complex (V0) that translocates protons. V-ATPase is responsible for acidifying and maintaining the pH of intracellular compartments and in some cell types, is targeted to the plasma membrane, where it is responsible for acidifying the extracellular environment. In aerobic conditions, involved in intracellular iron homeostasis, thus triggering the activity of Fe(2+) prolyl hydroxylase (PHD) enzymes, and leading to HIF1A hydroxylation and subsequent proteasomal degradation. May play a role in neurite development and synaptic connectivity. The protein is V-type proton ATPase catalytic subunit A (ATP6V1A) of Bos taurus (Bovine).